Here is a 691-residue protein sequence, read N- to C-terminus: DNA ligase (691 aa).

NAD(+) is bound by residues 41 to 45, 90 to 91, and Glu-130; these read DAEYD and SL. The N6-AMP-lysine intermediate role is filled by Lys-132. Residues Arg-153, Glu-190, Lys-307, and Lys-331 each contribute to the NAD(+) site. Zn(2+) is bound by residues Cys-425, Cys-428, Cys-443, and Cys-449. A BRCT domain is found at 610 to 691; it reads APQGVLAGKT…LHQLLEGNTP (82 aa).

This sequence belongs to the NAD-dependent DNA ligase family. LigA subfamily. The cofactor is Mg(2+). Requires Mn(2+) as cofactor.

It catalyses the reaction NAD(+) + (deoxyribonucleotide)n-3'-hydroxyl + 5'-phospho-(deoxyribonucleotide)m = (deoxyribonucleotide)n+m + AMP + beta-nicotinamide D-nucleotide.. Its function is as follows. DNA ligase that catalyzes the formation of phosphodiester linkages between 5'-phosphoryl and 3'-hydroxyl groups in double-stranded DNA using NAD as a coenzyme and as the energy source for the reaction. It is essential for DNA replication and repair of damaged DNA. The protein is DNA ligase of Burkholderia ambifaria (strain ATCC BAA-244 / DSM 16087 / CCUG 44356 / LMG 19182 / AMMD) (Burkholderia cepacia (strain AMMD)).